Here is a 389-residue protein sequence, read N- to C-terminus: Exodeoxyribonuclease 7 large subunit (389 aa).

Belongs to the XseA family. In terms of assembly, heterooligomer composed of large and small subunits.

The protein resides in the cytoplasm. The enzyme catalyses Exonucleolytic cleavage in either 5'- to 3'- or 3'- to 5'-direction to yield nucleoside 5'-phosphates.. Its function is as follows. Bidirectionally degrades single-stranded DNA into large acid-insoluble oligonucleotides, which are then degraded further into small acid-soluble oligonucleotides. This is Exodeoxyribonuclease 7 large subunit from Pseudothermotoga lettingae (strain ATCC BAA-301 / DSM 14385 / NBRC 107922 / TMO) (Thermotoga lettingae).